The sequence spans 107 residues: Replication initiation control protein YabA (107 aa).

Zn(2+)-binding residues include His81, Cys83, Cys97, and Cys100.

The protein belongs to the YabA family. Homotetramer. Interacts with both DnaA and DnaN, acting as a bridge between these two proteins. It depends on Zn(2+) as a cofactor.

It localises to the cytoplasm. The protein resides in the nucleoid. Involved in control of chromosome replication initiation. Inhibits the cooperative binding of DnaA to the oriC region, thus negatively regulating initiation of chromosome replication. Inhibits the ability of DnaA-ATP to form a helix on DNA; does not disassemble preformed DnaA-DNA helices. Decreases the residence time of DnaA on the chromosome at its binding sites (oriC, replication forks and promoter-binding sites). Tethers DnaA to the replication machinery via the DNA polymerase beta sliding clamp subunit (dnaN). Associates with oriC and other DnaA targets on the chromosome in a DnaA-dependent manner. This Streptococcus pyogenes serotype M1 protein is Replication initiation control protein YabA.